The following is a 425-amino-acid chain: Histidine--tRNA ligase 1 (425 aa).

The protein belongs to the class-II aminoacyl-tRNA synthetase family. Homodimer.

The protein resides in the cytoplasm. It carries out the reaction tRNA(His) + L-histidine + ATP = L-histidyl-tRNA(His) + AMP + diphosphate + H(+). This chain is Histidine--tRNA ligase 1, found in Bacillus thuringiensis subsp. konkukian (strain 97-27).